The sequence spans 459 residues: Trigger factor (459 aa).

The PPIase FKBP-type domain occupies 161 to 246 (GDKVVIDFQG…IKKIMEGKLP (86 aa)).

The protein belongs to the FKBP-type PPIase family. Tig subfamily.

Its subcellular location is the cytoplasm. The catalysed reaction is [protein]-peptidylproline (omega=180) = [protein]-peptidylproline (omega=0). In terms of biological role, involved in protein export. Acts as a chaperone by maintaining the newly synthesized protein in an open conformation. Functions as a peptidyl-prolyl cis-trans isomerase. In Legionella pneumophila (strain Corby), this protein is Trigger factor.